Reading from the N-terminus, the 61-residue chain is Small ribosomal subunit protein uS14 (61 aa).

The Zn(2+) site is built by Cys24, Cys27, Cys40, and Cys43.

It belongs to the universal ribosomal protein uS14 family. Zinc-binding uS14 subfamily. In terms of assembly, part of the 30S ribosomal subunit. Contacts proteins S3 and S10. Zn(2+) is required as a cofactor.

Functionally, binds 16S rRNA, required for the assembly of 30S particles and may also be responsible for determining the conformation of the 16S rRNA at the A site. This is Small ribosomal subunit protein uS14 from Thermosipho africanus (strain TCF52B).